The sequence spans 416 residues: Protein-glutamine gamma-glutamyltransferase (416 aa).

The segment at residues 1-29 (MHKRRRLLAFATVGAVICTAGFTPSVSQA) is a signal peptide (tat-type signal). Residues 30–85 (ASSGDGEEKGSYAETHGLTADDVESINALNERALTLGQPGKPPKELPPSASAPSRA) constitute a propeptide that is removed on maturation. A disordered region spans residues 64–103 (TLGQPGKPPKELPPSASAPSRAPSDDRETPPAEPLDRMPE). Positions 76-85 (PPSASAPSRA) are enriched in low complexity. The segment covering 86 to 103 (PSDDRETPPAEPLDRMPE) has biased composition (basic and acidic residues). Residue C149 is part of the active site. The segment at 290–331 (GQDQRGSSDKRKYGDPEAFRPDQGTGLVDMSKDRSIPRSPAK) is disordered. Residues 295–309 (GSSDKRKYGDPEAFR) are compositionally biased toward basic and acidic residues. Catalysis depends on residues D340 and H359.

This sequence belongs to the bacterial TGase family. Predicted to be exported by the Tat system. The position of the signal peptide cleavage has not been experimentally proven.

The enzyme catalyses L-glutaminyl-[protein] + L-lysyl-[protein] = [protein]-L-lysyl-N(6)-5-L-glutamyl-[protein] + NH4(+). In terms of biological role, catalyzes the cross-linking of proteins and the conjugation of polyamines to proteins. The protein is Protein-glutamine gamma-glutamyltransferase of Streptomyces cinnamoneus (Streptoverticillium cinnamoneum).